The sequence spans 426 residues: Serine--tRNA ligase (426 aa).

The interval Arg37–Ala63 is disordered. Thr233–Glu235 is a binding site for L-serine. Position 264–266 (Arg264–Glu266) interacts with ATP. Glu287 lines the L-serine pocket. Glu351 to Ser354 lines the ATP pocket. An L-serine-binding site is contributed by Ser387.

This sequence belongs to the class-II aminoacyl-tRNA synthetase family. Type-1 seryl-tRNA synthetase subfamily. As to quaternary structure, homodimer. The tRNA molecule binds across the dimer.

It is found in the cytoplasm. It carries out the reaction tRNA(Ser) + L-serine + ATP = L-seryl-tRNA(Ser) + AMP + diphosphate + H(+). It catalyses the reaction tRNA(Sec) + L-serine + ATP = L-seryl-tRNA(Sec) + AMP + diphosphate + H(+). It participates in aminoacyl-tRNA biosynthesis; selenocysteinyl-tRNA(Sec) biosynthesis; L-seryl-tRNA(Sec) from L-serine and tRNA(Sec): step 1/1. In terms of biological role, catalyzes the attachment of serine to tRNA(Ser). Is also able to aminoacylate tRNA(Sec) with serine, to form the misacylated tRNA L-seryl-tRNA(Sec), which will be further converted into selenocysteinyl-tRNA(Sec). The protein is Serine--tRNA ligase of Pseudomonas entomophila (strain L48).